Reading from the N-terminus, the 108-residue chain is Class I hydrophobin 3 (108 aa).

An N-terminal signal peptide occupies residues 1 to 17 (MFFQTTIVAALASLAVA). Disulfide bonds link Cys-28/Cys-87, Cys-35/Cys-81, Cys-36/Cys-69, and Cys-88/Cys-101. Asn-37 is a glycosylation site (N-linked (GlcNAc...) asparagine).

It belongs to the fungal hydrophobin family. In terms of assembly, self-assembles to form functional amyloid fibrils called rodlets. Self-assembly into fibrillar rodlets occurs spontaneously at hydrophobic:hydrophilic interfaces and the rodlets further associate laterally to form amphipathic monolayers.

The protein localises to the secreted. It localises to the cell wall. Aerial growth, conidiation, and dispersal of filamentous fungi in the environment rely upon a capability of their secreting small amphipathic proteins called hydrophobins (HPBs) with low sequence identity. Class I can self-assemble into an outermost layer of rodlet bundles on aerial cell surfaces, conferring cellular hydrophobicity that supports fungal growth, development and dispersal; whereas Class II form highly ordered films at water-air interfaces through intermolecular interactions but contribute nothing to the rodlet structure. Vmh3 is a class I hydrophobin that is essential for the maintenance of the surface hydrophobicity of the mycelium and might be involved in the development of fruiting bodies. Plays an important role in hyphal resistance against environmental stress. Necessary for the efficient biodegradation of lignin. The chain is Class I hydrophobin 3 from Pleurotus ostreatus (strain PC15) (Oyster mushroom).